We begin with the raw amino-acid sequence, 642 residues long: Threonine--tRNA ligase (642 aa).

The TGS domain occupies 1 to 61 (MPIITLPDGS…EADASLAIIT (61 aa)). The interval 243–534 (DHRKIGKQLD…LTEEYAGLFP (292 aa)) is catalytic. Zn(2+)-binding residues include Cys334, His385, and His511.

The protein belongs to the class-II aminoacyl-tRNA synthetase family. Homodimer. Zn(2+) is required as a cofactor.

It localises to the cytoplasm. It carries out the reaction tRNA(Thr) + L-threonine + ATP = L-threonyl-tRNA(Thr) + AMP + diphosphate + H(+). Catalyzes the attachment of threonine to tRNA(Thr) in a two-step reaction: L-threonine is first activated by ATP to form Thr-AMP and then transferred to the acceptor end of tRNA(Thr). Also edits incorrectly charged L-seryl-tRNA(Thr). This is Threonine--tRNA ligase from Aeromonas hydrophila subsp. hydrophila (strain ATCC 7966 / DSM 30187 / BCRC 13018 / CCUG 14551 / JCM 1027 / KCTC 2358 / NCIMB 9240 / NCTC 8049).